The chain runs to 817 residues: Nuclear hormone receptor family member nhr-48 (817 aa).

The interval 49–91 is disordered; that stretch reads YNDDKDDPFYEDEGSGGGTSGGGKKSSRKRANTTSSSGGNEKE. Positions 52–62 are enriched in acidic residues; that stretch reads DKDDPFYEDEG. The segment covering 63–72 has biased composition (gly residues); the sequence is SGGGTSGGGK. A DNA-binding region (nuclear receptor) is located at residues 97-172; sequence NKVCRVCGDK…VGMKKEWIMS (76 aa). NR C4-type zinc fingers lie at residues 100-120 and 136-155; these read CRVC…CESC and CPFN…CQRC. The segment covering 202 to 212 has biased composition (acidic residues); sequence ACMEDESENSY. Disordered stretches follow at residues 202 to 221 and 258 to 284; these read ACME…PSHQ and MNFY…SSQL. Over residues 273-284 the composition is skewed to polar residues; sequence LPSNSCASSSQL.

The protein belongs to the nuclear hormone receptor family.

The protein resides in the nucleus. Orphan nuclear receptor. The chain is Nuclear hormone receptor family member nhr-48 (nhr-48) from Caenorhabditis elegans.